A 213-amino-acid polypeptide reads, in one-letter code: Transcription antitermination protein NusB (213 aa).

It belongs to the NusB family.

Involved in transcription antitermination. Required for transcription of ribosomal RNA (rRNA) genes. Binds specifically to the boxA antiterminator sequence of the ribosomal RNA (rrn) operons. This Picosynechococcus sp. (strain ATCC 27264 / PCC 7002 / PR-6) (Agmenellum quadruplicatum) protein is Transcription antitermination protein NusB.